A 59-amino-acid chain; its full sequence is Large ribosomal subunit protein uL30 (59 aa).

The protein belongs to the universal ribosomal protein uL30 family. As to quaternary structure, part of the 50S ribosomal subunit.

The chain is Large ribosomal subunit protein uL30 from Buchnera aphidicola subsp. Acyrthosiphon pisum (strain 5A).